The primary structure comprises 342 residues: Cell division protein ZipA (342 aa).

Residues 1–6 lie on the Periplasmic side of the membrane; that stretch reads MEDLQL. The helical transmembrane segment at 7-27 threads the bilayer; it reads VLFILGAIAIVAVLVHGFWSI. Residues 28–342 lie on the Cytoplasmic side of the membrane; that stretch reads RRQQPKSLKD…DYLHRIRANA (315 aa). The interval 33 to 57 is disordered; it reads KSLKDSPMGNFYKQQADKESPPKRV. Positions 47-57 are enriched in basic and acidic residues; it reads QADKESPPKRV.

It belongs to the ZipA family. In terms of assembly, interacts with FtsZ via their C-terminal domains.

It is found in the cell inner membrane. Its function is as follows. Essential cell division protein that stabilizes the FtsZ protofilaments by cross-linking them and that serves as a cytoplasmic membrane anchor for the Z ring. Also required for the recruitment to the septal ring of downstream cell division proteins. This chain is Cell division protein ZipA, found in Shewanella putrefaciens (strain CN-32 / ATCC BAA-453).